The primary structure comprises 468 residues: Peroxisome proliferator-activated receptor alpha (468 aa).

A DNA-binding region (nuclear receptor) is located at residues 99 to 173 (NIECRICGDK…VGMSHNAIRF (75 aa)). 2 consecutive NR C4-type zinc fingers follow at residues 102-122 (CRICGDKASGYHYGVHACEGC) and 139-161 (CDRSCKIQKKNRNKCQYCRFHKC). Positions 239–466 (FVIHDMETLC…HPLLQEIYRD (228 aa)) constitute an NR LBD domain. Positions 304 to 433 (DQVTLLKYGV…PKLLQKMVDL (130 aa)) are required for heterodimerization with RXRA.

It belongs to the nuclear hormone receptor family. NR1 subfamily. In terms of assembly, heterodimer; with RXRA. This heterodimerization is required for DNA binding and transactivation activity. Interacts with NCOA3 coactivator. Interacts with CITED2; the interaction stimulates its transcriptional activity. Also interacts with PPARBP in vitro. Interacts with AKAP13, LPIN1, PRDM16 and coactivator NCOA6. Interacts with ASXL1 and ASXL2. Interacts with PER2. Interacts with SIRT1; the interaction seems to be modulated by NAD(+) levels. Interacts with CRY1 and CRY2. In hepatocytes, interacts with PAQR3 and HUWE1; the interactions promote PPARA poylubiquitination and HUWE1-mediated degradation. Phosphorylated. Post-translationally, ubiquitinated by E3 ubiquitin-protein ligase HUWE1; leading to proteasomal degradation. In terms of tissue distribution, expressed predominantly in liver and kidney.

The protein localises to the nucleus. Ligand-activated transcription factor. Key regulator of lipid metabolism. Activated by the endogenous ligand 1-palmitoyl-2-oleoyl-sn-glycerol-3-phosphocholine (16:0/18:1-GPC). Activated by oleylethanolamide, a naturally occurring lipid that regulates satiety. Receptor for peroxisome proliferators such as hypolipidemic drugs and fatty acids. Regulates the peroxisomal beta-oxidation pathway of fatty acids. Functions as a transcription activator for the ACOX1 and P450 genes. Transactivation activity requires heterodimerization with RXRA and is antagonized by NR2C2. May be required for the propagation of clock information to metabolic pathways regulated by PER2. The sequence is that of Peroxisome proliferator-activated receptor alpha (Ppara) from Rattus norvegicus (Rat).